The chain runs to 123 residues: Small ribosomal subunit protein uS12c (123 aa).

Belongs to the universal ribosomal protein uS12 family. In terms of assembly, part of the 30S ribosomal subunit.

Its subcellular location is the plastid. The protein localises to the chloroplast. Its function is as follows. With S4 and S5 plays an important role in translational accuracy. Located at the interface of the 30S and 50S subunits. In Marchantia polymorpha (Common liverwort), this protein is Small ribosomal subunit protein uS12c (rps12).